The primary structure comprises 83 residues: Bowman-Birk type proteinase inhibitor C-II (83 aa).

Residues 1-7 constitute a propeptide that is removed on maturation; sequence MELNLFK. 7 disulfide bridges follow: Cys21–Cys75, Cys22–Cys37, Cys25–Cys71, Cys27–Cys35, Cys45–Cys52, Cys49–Cys64, and Cys54–Cys62.

This sequence belongs to the Bowman-Birk serine protease inhibitor family.

The chain is Bowman-Birk type proteinase inhibitor C-II from Glycine max (Soybean).